The primary structure comprises 520 residues: Bifunctional dihydrofolate reductase-thymidylate synthase (520 aa).

Residues 26-229 enclose the DHFR domain; it reads AFSIVVALDM…LEFEICKYVP (204 aa). Residue Val30 participates in substrate binding. Residues Ala32 and 38-44 contribute to the NADP(+) site; that span reads GIGDGES. Asp52 provides a ligand contact to substrate. NADP(+) is bound by residues 81 to 83, 102 to 105, and 157 to 164; these read RKT, LSSK, and GGAQVYAD. The substrate site is built by Tyr162 and Thr180. A thymidylate synthase region spans residues 234–520; that stretch reads ERQYLELIDR…HPAIKMEMAV (287 aa). Arg254 is a dUMP binding site. Cys400 is a catalytic residue. DUMP-binding positions include His401, 421-425, Asn433, and 463-465; these read QRSCD and HVY.

In the N-terminal section; belongs to the dihydrofolate reductase family. The protein in the C-terminal section; belongs to the thymidylate synthase family.

The enzyme catalyses (6S)-5,6,7,8-tetrahydrofolate + NADP(+) = 7,8-dihydrofolate + NADPH + H(+). The catalysed reaction is dUMP + (6R)-5,10-methylene-5,6,7,8-tetrahydrofolate = 7,8-dihydrofolate + dTMP. It functions in the pathway cofactor biosynthesis; tetrahydrofolate biosynthesis; 5,6,7,8-tetrahydrofolate from 7,8-dihydrofolate: step 1/1. Bifunctional enzyme. Involved in de novo dTMP biosynthesis. Key enzyme in folate metabolism. Catalyzes an essential reaction for de novo glycine and purine synthesis, DNA precursor synthesis, and for the conversion of dUMP to dTMP. The protein is Bifunctional dihydrofolate reductase-thymidylate synthase of Leishmania major.